Consider the following 220-residue polypeptide: Cell division protein DedD (220 aa).

Residues 9-29 (LVGTIVLVALGVIVLPGLLDG) form a helical membrane-spanning segment. Disordered regions lie at residues 46–84 (KAGD…AAPS) and 97–137 (FEPE…EEKA). The segment covering 57 to 70 (PAATQALPTQPPEG) has biased composition (low complexity). A compositionally biased stretch (pro residues) spans 100 to 109 (EPAPVAPPKP). Basic and acidic residues-rich tracts occupy residues 110–119 (KPVEPPKPKV) and 127–137 (PEPKPVVEEKA). Residues 138-217 (APTGKAYVVQ…SGLSGVVMGY (80 aa)) enclose the SPOR domain.

Belongs to the DedD family.

The protein resides in the cell inner membrane. Functionally, non-essential cell division protein that could be required for efficient cell constriction. The chain is Cell division protein DedD from Escherichia coli (strain K12).